Reading from the N-terminus, the 204-residue chain is Large ribosomal subunit protein uL3c (204 aa).

The disordered stretch occupies residues 126-155 (HNFTRGPMTHGSKNHREPGSIGQGSTPAKV).

Belongs to the universal ribosomal protein uL3 family. Part of the 50S ribosomal subunit.

Its subcellular location is the plastid. It localises to the chloroplast. In terms of biological role, one of the primary rRNA binding proteins, it binds directly near the 3'-end of the 23S rRNA, where it nucleates assembly of the 50S subunit. This chain is Large ribosomal subunit protein uL3c (rpl3), found in Guillardia theta (Cryptophyte).